The sequence spans 235 residues: Urease accessory protein UreF (235 aa).

This sequence belongs to the UreF family. UreD, UreF and UreG form a complex that acts as a GTP-hydrolysis-dependent molecular chaperone, activating the urease apoprotein by helping to assemble the nickel containing metallocenter of UreC. The UreE protein probably delivers the nickel.

The protein resides in the cytoplasm. Required for maturation of urease via the functional incorporation of the urease nickel metallocenter. This Haemophilus influenzae (strain ATCC 51907 / DSM 11121 / KW20 / Rd) protein is Urease accessory protein UreF.